A 611-amino-acid chain; its full sequence is Phosphomethylpyrimidine synthase (611 aa).

Substrate contacts are provided by residues asparagine 212, methionine 241, tyrosine 270, histidine 306, 326-328, 367-370, and glutamate 406; these read SRG and DGLR. Histidine 410 is a binding site for Zn(2+). Tyrosine 433 lines the substrate pocket. Zn(2+) is bound at residue histidine 474. Cysteine 554, cysteine 557, and cysteine 562 together coordinate [4Fe-4S] cluster.

This sequence belongs to the ThiC family. As to quaternary structure, homodimer. Requires [4Fe-4S] cluster as cofactor.

The enzyme catalyses 5-amino-1-(5-phospho-beta-D-ribosyl)imidazole + S-adenosyl-L-methionine = 4-amino-2-methyl-5-(phosphooxymethyl)pyrimidine + CO + 5'-deoxyadenosine + formate + L-methionine + 3 H(+). It participates in cofactor biosynthesis; thiamine diphosphate biosynthesis. Functionally, catalyzes the synthesis of the hydroxymethylpyrimidine phosphate (HMP-P) moiety of thiamine from aminoimidazole ribotide (AIR) in a radical S-adenosyl-L-methionine (SAM)-dependent reaction. This Bartonella bacilliformis (strain ATCC 35685 / KC583 / Herrer 020/F12,63) protein is Phosphomethylpyrimidine synthase.